Reading from the N-terminus, the 492-residue chain is Probable cytosol aminopeptidase (492 aa).

Positions 248 and 253 each coordinate Mn(2+). The active site involves Lys260. Residues Asp271, Asp330, and Glu332 each coordinate Mn(2+). Arg334 is a catalytic residue.

It belongs to the peptidase M17 family. Mn(2+) serves as cofactor.

The protein localises to the cytoplasm. It catalyses the reaction Release of an N-terminal amino acid, Xaa-|-Yaa-, in which Xaa is preferably Leu, but may be other amino acids including Pro although not Arg or Lys, and Yaa may be Pro. Amino acid amides and methyl esters are also readily hydrolyzed, but rates on arylamides are exceedingly low.. The enzyme catalyses Release of an N-terminal amino acid, preferentially leucine, but not glutamic or aspartic acids.. In terms of biological role, presumably involved in the processing and regular turnover of intracellular proteins. Catalyzes the removal of unsubstituted N-terminal amino acids from various peptides. The protein is Probable cytosol aminopeptidase (pepA) of Aeropyrum pernix (strain ATCC 700893 / DSM 11879 / JCM 9820 / NBRC 100138 / K1).